Reading from the N-terminus, the 303-residue chain is Zinc import ATP-binding protein ZnuC (303 aa).

An ABC transporter domain is found at 17–232; it reads VSLENVGVLR…PEYVRLFGSR (216 aa). 49–56 serves as a coordination point for ATP; the sequence is GPNGSGKS. Residues 263 to 303 form a disordered region; sequence DHCHPDDGHHAHEHGHAGHEHDHDHPDHAHPHAHEAGERHA.

Belongs to the ABC transporter superfamily. Zinc importer (TC 3.A.1.15.5) family. The complex is composed of two ATP-binding proteins (ZnuC), two transmembrane proteins (ZnuB) and a solute-binding protein (ZnuA).

The protein resides in the cell inner membrane. It catalyses the reaction Zn(2+)(out) + ATP(in) + H2O(in) = Zn(2+)(in) + ADP(in) + phosphate(in) + H(+)(in). In terms of biological role, part of the ABC transporter complex ZnuABC involved in zinc import. Responsible for energy coupling to the transport system. The protein is Zinc import ATP-binding protein ZnuC of Rhizobium johnstonii (strain DSM 114642 / LMG 32736 / 3841) (Rhizobium leguminosarum bv. viciae).